We begin with the raw amino-acid sequence, 497 residues long: Glycerol kinase (497 aa).

Threonine 11 provides a ligand contact to ADP. Threonine 11, threonine 12, and serine 13 together coordinate ATP. Residue threonine 11 participates in sn-glycerol 3-phosphate binding. Arginine 15 provides a ligand contact to ADP. Arginine 81, glutamate 82, tyrosine 133, and aspartate 242 together coordinate sn-glycerol 3-phosphate. The glycerol site is built by arginine 81, glutamate 82, tyrosine 133, aspartate 242, and glutamine 243. Threonine 264 and glycine 306 together coordinate ADP. Residues threonine 264, glycine 306, glutamine 310, and glycine 407 each contribute to the ATP site. ADP contacts are provided by glycine 407 and asparagine 411.

The protein belongs to the FGGY kinase family.

The catalysed reaction is glycerol + ATP = sn-glycerol 3-phosphate + ADP + H(+). It participates in polyol metabolism; glycerol degradation via glycerol kinase pathway; sn-glycerol 3-phosphate from glycerol: step 1/1. Inhibited by fructose 1,6-bisphosphate (FBP). In terms of biological role, key enzyme in the regulation of glycerol uptake and metabolism. Catalyzes the phosphorylation of glycerol to yield sn-glycerol 3-phosphate. The sequence is that of Glycerol kinase from Alcanivorax borkumensis (strain ATCC 700651 / DSM 11573 / NCIMB 13689 / SK2).